We begin with the raw amino-acid sequence, 363 residues long: Endopolygalacturonase 1 (363 aa).

A signal peptide spans 1 to 17; it reads MVSYLFVLGALASVAIA. A propeptide spanning residues 18 to 26 is cleaved from the precursor; that stretch reads SPVPELKAR. Cys-29 and Cys-44 are joined by a disulfide. PbH1 repeat units follow at residues 188–209, 210–230, 239–260, and 268–290; these read STGV…AVNS, GTNI…SIGS, VKSV…RIKT, and VSDI…VIEQ. The active-site Proton donor is the Asp-202. Cysteines 204 and 220 form a disulfide. Asn-212 is a glycosylation site (N-linked (GlcNAc...) asparagine). Residue His-224 is part of the active site. 2 disulfides stabilise this stretch: Cys-330/Cys-333 and Cys-352/Cys-363.

It belongs to the glycosyl hydrolase 28 family.

It is found in the secreted. It carries out the reaction (1,4-alpha-D-galacturonosyl)n+m + H2O = (1,4-alpha-D-galacturonosyl)n + (1,4-alpha-D-galacturonosyl)m.. Involved in maceration and soft-rotting of plant tissue. Hydrolyzes the 1,4-alpha glycosidic bonds of de-esterified pectate in the smooth region of the plant cell wall. This Colletotrichum lindemuthianum (Bean anthracnose fungus) protein is Endopolygalacturonase 1 (PG1).